The following is an 895-amino-acid chain: Zinc finger protein 281 (895 aa).

Disordered regions lie at residues 1-44 (MKIG…EMEP) and 63-113 (FTRP…AFPS). K2 participates in a covalent cross-link: Glycyl lysine isopeptide (Lys-Gly) (interchain with G-Cter in SUMO2). Gly residues predominate over residues 7 to 36 (FLSGGGGTGSSGGSGSGGGGSGGGGGGGSS). Glycyl lysine isopeptide (Lys-Gly) (interchain with G-Cter in SUMO2) cross-links involve residues R65, K101, and K128. 2 stretches are compositionally biased toward basic and acidic residues: residues 130–140 (EKPADPEEQQS) and 202–218 (RTDD…DTNV). Disordered regions lie at residues 130–149 (EKPA…HHHY) and 183–253 (HVQQ…EGAI). Residues K213, K219, K225, K232, K242, and K259 each participate in a glycyl lysine isopeptide (Lys-Gly) (interchain with G-Cter in SUMO2) cross-link. 3 C2H2-type zinc fingers span residues 261–283 (HICD…VLIH), 289–311 (FQCS…EKIH), and 317–339 (FGCD…KRTH). Glycyl lysine isopeptide (Lys-Gly) (interchain with G-Cter in SUMO2) cross-links involve residues K301 and K325. The segment at 345–367 (YKCDTCQQYFSRTDRLLKHRRTC) adopts a C2H2-type 4; atypical zinc-finger fold. Residue K373 forms a Glycyl lysine isopeptide (Lys-Gly) (interchain with G-Cter in SUMO2) linkage. A disordered region spans residues 377–427 (SAEPGSSNHTNMGNLAVLSQGNTSSSRRKTKSKSIAIENKEQKTGKTNESQ). Residues 379–398 (EPGSSNHTNMGNLAVLSQGN) are compositionally biased toward polar residues. S395 is modified (phosphoserine). Residues K409, K416, K460, and K477 each participate in a glycyl lysine isopeptide (Lys-Gly) (interchain with G-Cter in SUMO2) cross-link. The residue at position 484 (S484) is a Phosphoserine. Glycyl lysine isopeptide (Lys-Gly) (interchain with G-Cter in SUMO2) cross-links involve residues K493, K498, K539, K599, K617, and K622. The segment at 638–660 (SGEHSELVQEENLSPGTQTPSND) is disordered. Positions 648-660 (ENLSPGTQTPSND) are enriched in polar residues. At S651 the chain carries Phosphoserine. Glycyl lysine isopeptide (Lys-Gly) (interchain with G-Cter in SUMO2) cross-links involve residues K661 and K670. The segment covering 778-789 (SSAFQSSSQKLT) has biased composition (polar residues). The segment at 778 to 817 (SSAFQSSSQKLTSQKEQKNLESSTGFQIPSQELASQIDPQ) is disordered. Residue S785 is modified to Phosphoserine. Residues K787, K792, and K795 each participate in a glycyl lysine isopeptide (Lys-Gly) (interchain with G-Cter in SUMO2) cross-link. Over residues 797-815 (LESSTGFQIPSQELASQID) the composition is skewed to polar residues. Position 807 is a phosphoserine (S807). Glycyl lysine isopeptide (Lys-Gly) (interchain with G-Cter in SUMO2) cross-links involve residues K818 and K840. Phosphothreonine is present on T888.

Belongs to the krueppel C2H2-type zinc-finger protein family.

The protein localises to the nucleus. In terms of biological role, transcription repressor that plays a role in regulation of embryonic stem cells (ESCs) differentiation. Required for ESCs differentiation and acts by mediating autorepression of NANOG in ESCs: binds to the NANOG promoter and promotes association of NANOG protein to its own promoter and recruits the NuRD complex, which deacetylates histones. Not required for establishement and maintenance of ESCs. Represses the transcription of a number of genes including GAST, ODC1 and VIM. Binds to the G-rich box in the enhancer region of these genes. This is Zinc finger protein 281 (ZNF281) from Homo sapiens (Human).